The chain runs to 171 residues: 3-hydroxydecanoyl-[acyl-carrier-protein] dehydratase (171 aa).

Histidine 71 is a catalytic residue.

This sequence belongs to the thioester dehydratase family. FabA subfamily. In terms of assembly, homodimer.

It is found in the cytoplasm. It carries out the reaction a (3R)-hydroxyacyl-[ACP] = a (2E)-enoyl-[ACP] + H2O. It catalyses the reaction (3R)-hydroxydecanoyl-[ACP] = (2E)-decenoyl-[ACP] + H2O. The enzyme catalyses (2E)-decenoyl-[ACP] = (3Z)-decenoyl-[ACP]. Its pathway is lipid metabolism; fatty acid biosynthesis. Necessary for the introduction of cis unsaturation into fatty acids. Catalyzes the dehydration of (3R)-3-hydroxydecanoyl-ACP to E-(2)-decenoyl-ACP and then its isomerization to Z-(3)-decenoyl-ACP. Can catalyze the dehydratase reaction for beta-hydroxyacyl-ACPs with saturated chain lengths up to 16:0, being most active on intermediate chain length. In Rhizobium meliloti (strain 1021) (Ensifer meliloti), this protein is 3-hydroxydecanoyl-[acyl-carrier-protein] dehydratase.